We begin with the raw amino-acid sequence, 92 residues long: Transcriptional regulator WhiB1 (92 aa).

The 4Fe-4S Wbl-type domain maps to 12-74 (ACRDKDPELF…GGLSEDERRA (63 aa)). Residues Cys13, Cys41, Cys44, and Cys50 each contribute to the [4Fe-4S] cluster site.

The protein belongs to the WhiB family. It depends on [4Fe-4S] cluster as a cofactor. The Fe-S cluster can be nitrosylated by nitric oxide (NO). Post-translationally, upon Fe-S cluster removal intramolecular disulfide bonds are formed.

The protein localises to the cytoplasm. Its function is as follows. Acts as a transcriptional regulator. Probably redox-responsive. The apo- but not holo-form probably binds DNA. The protein is Transcriptional regulator WhiB1 (whiB1) of Bifidobacterium longum (strain NCC 2705).